A 317-amino-acid polypeptide reads, in one-letter code: Melanocyte-stimulating hormone receptor (317 aa).

Residues Met1–Glu37 lie on the Extracellular side of the membrane. N-linked (GlcNAc...) asparagine glycosylation is present at Asn29. The chain crosses the membrane as a helical span at residues Val38–Ile63. At Ala64 to Pro72 the chain is on the cytoplasmic side. Residues Met73–Leu93 traverse the membrane as a helical segment. At Glu94 to Asn118 the chain is on the extracellular side. The helical transmembrane segment at Val119–Val140 threads the bilayer. Residues Asp141–Arg163 are Cytoplasmic-facing. A helical membrane pass occupies residues Ala164–Tyr183. Over Asp184–Cys191 the chain is Extracellular. A helical transmembrane segment spans residues Leu192–Leu211. Residues Ala212–Ala240 lie on the Cytoplasmic side of the membrane. The helical transmembrane segment at Val241–Leu266 threads the bilayer. Residues Cys267 to Asn279 lie on the Extracellular side of the membrane. Residues Phe280–Phe300 traverse the membrane as a helical segment. Topologically, residues Arg301–Trp317 are cytoplasmic. Cys315 carries S-palmitoyl cysteine lipidation.

The protein belongs to the G-protein coupled receptor 1 family. In terms of assembly, interacts with MGRN1, but does not undergo MGRN1-mediated ubiquitination; this interaction competes with GNAS-binding and thus inhibits agonist-induced cAMP production. Interacts with OPN3; the interaction results in a decrease in MC1R-mediated cAMP signaling and ultimately a decrease in melanin production in melanocytes.

The protein localises to the cell membrane. Receptor for MSH (alpha, beta and gamma) and ACTH. The activity of this receptor is mediated by G proteins which activate adenylate cyclase. Mediates melanogenesis, the production of eumelanin (black/brown) and phaeomelanin (red/yellow), via regulation of cAMP signaling in melanocytes. This is Melanocyte-stimulating hormone receptor (MC1R) from Pongo pygmaeus (Bornean orangutan).